A 331-amino-acid chain; its full sequence is Cathepsin 7 (331 aa).

Positions 1 to 17 are cleaved as a signal peptide; it reads MTVAVFLAILCLRAALA. The propeptide at 18 to 111 is activation peptide; it reads APRPDYSLDA…GKHIQKRNVK (94 aa). The Nuclear localization signal signature appears at 33-50; sequence KRNNAKTYSPEEEKQRRA. An N-linked (GlcNAc...) asparagine glycan is attached at Asn-72. Intrachain disulfides connect Cys-133-Cys-176, Cys-167-Cys-209, and Cys-267-Cys-320. The active site involves Cys-136. Residues His-274 and Asn-298 contribute to the active site.

The protein belongs to the peptidase C1 family.

It localises to the endosome. It is found in the lysosome. Its subcellular location is the cytoplasm. The protein resides in the perinuclear region. The protein localises to the golgi apparatus. It localises to the nucleus. It is found in the secreted. Its subcellular location is the extracellular space. Functionally, involved in trophoblast cell proliferation and differentiation probably by affecting mitotic cell cycle progression. Proteolytic activity and nuclear localization are essential for its role in cell cycle progression. The chain is Cathepsin 7 (Cts7) from Rattus norvegicus (Rat).